The chain runs to 361 residues: Phospho-N-acetylmuramoyl-pentapeptide-transferase (361 aa).

Transmembrane regions (helical) follow at residues 27–47 (ILAS…MIRW), 70–90 (GTPT…CLLW), 97–117 (SLWL…VDDY), 134–154 (YFWQ…NASL), 167–187 (TVTW…IVGS), 199–219 (GLAI…AYAS), 236–256 (TGEL…FLWY), 263–283 (VFMG…VAVV), 288–308 (LVLL…ILQV), and 338–358 (KVIV…LATL).

The protein belongs to the glycosyltransferase 4 family. MraY subfamily. Requires Mg(2+) as cofactor.

Its subcellular location is the cell inner membrane. The enzyme catalyses UDP-N-acetyl-alpha-D-muramoyl-L-alanyl-gamma-D-glutamyl-meso-2,6-diaminopimeloyl-D-alanyl-D-alanine + di-trans,octa-cis-undecaprenyl phosphate = di-trans,octa-cis-undecaprenyl diphospho-N-acetyl-alpha-D-muramoyl-L-alanyl-D-glutamyl-meso-2,6-diaminopimeloyl-D-alanyl-D-alanine + UMP. It functions in the pathway cell wall biogenesis; peptidoglycan biosynthesis. In terms of biological role, catalyzes the initial step of the lipid cycle reactions in the biosynthesis of the cell wall peptidoglycan: transfers peptidoglycan precursor phospho-MurNAc-pentapeptide from UDP-MurNAc-pentapeptide onto the lipid carrier undecaprenyl phosphate, yielding undecaprenyl-pyrophosphoryl-MurNAc-pentapeptide, known as lipid I. This is Phospho-N-acetylmuramoyl-pentapeptide-transferase from Legionella pneumophila subsp. pneumophila (strain Philadelphia 1 / ATCC 33152 / DSM 7513).